Reading from the N-terminus, the 72-residue chain is Translation initiation factor IF-1 (72 aa).

One can recognise an S1-like domain in the interval 1-72 (MAKDDVIQMQ…SRARIVFRAK (72 aa)).

The protein belongs to the IF-1 family. Component of the 30S ribosomal translation pre-initiation complex which assembles on the 30S ribosome in the order IF-2 and IF-3, IF-1 and N-formylmethionyl-tRNA(fMet); mRNA recruitment can occur at any time during PIC assembly.

The protein localises to the cytoplasm. Its function is as follows. One of the essential components for the initiation of protein synthesis. Stabilizes the binding of IF-2 and IF-3 on the 30S subunit to which N-formylmethionyl-tRNA(fMet) subsequently binds. Helps modulate mRNA selection, yielding the 30S pre-initiation complex (PIC). Upon addition of the 50S ribosomal subunit IF-1, IF-2 and IF-3 are released leaving the mature 70S translation initiation complex. The chain is Translation initiation factor IF-1 from Burkholderia thailandensis (strain ATCC 700388 / DSM 13276 / CCUG 48851 / CIP 106301 / E264).